The chain runs to 73 residues: Putative antimicrobial peptide clone 4 (73 aa).

A signal peptide spans 1–22 (MQMKYLIPIFFLVLIVADHCHA). A propeptide spanning residues 45–73 (DITSQIEQYRNLQKREAELEDILANLPVY) is cleaved from the precursor.

This sequence belongs to the non-disulfide-bridged peptide (NDBP) superfamily. Short antimicrobial peptide (group 4) family. In terms of tissue distribution, expressed by the venom gland.

Its subcellular location is the secreted. Functionally, antimicrobial peptide. Has a high antibacterial activity against the Gram-positive bacterium S.aureus (MIC=5-17.30 uM), the methicillin-resistant S.aureus (MRSA) (MIC=17.30 uM), and E.faecalis (MIC=69.23 uM). Has antifungal activity against Candida spp. and one Cryptococcus neoformans strains with MICs values ranging from 6.25 to 100 uM. Also shows an inhibitory activity on C.albicans biofilms at high concentrations. Has a moderate hemolytic potency (18% at 20 uM). Also inhibits the growth of the five cancer cell lines tested. In the model of polymicrobial sepsis, it exhibits an antibiotic effect, reducing the levels of microorganisms in the infectious focus and the inflammatory responses in the lung and cecum of septic animals. In Tityus costatus (Brazilian scorpion), this protein is Putative antimicrobial peptide clone 4.